Reading from the N-terminus, the 558-residue chain is Rhamnogalacturonase B (558 aa).

Positions 1-21 (MLLDKLSVLSFLGLAPIFAAA) are cleaved as a signal peptide. Cys-42 and Cys-68 are disulfide-bonded. An N-linked (GlcNAc...) asparagine glycan is attached at Asn-145. The Proton donor role is filled by Asp-219. Cys-221 and Cys-238 are disulfide-bonded. N-linked (GlcNAc...) asparagine glycans are attached at residues Asn-239 and Asn-254. The active site involves His-294. An N-linked (GlcNAc...) asparagine glycan is attached at Asn-321. Intrachain disulfides connect Cys-344–Cys-350 and Cys-372–Cys-381. The segment covering 503–526 (VGAQEGSTTSAPSFAAPSGAGNSP) has biased composition (low complexity). Residues 503 to 558 (VGAQEGSTTSAPSFAAPSGAGNSPQGPTGASGFGEKGQQGEQGEQGEQGEQGVCYV) form a disordered region.

It belongs to the glycosyl hydrolase 28 family.

The protein localises to the secreted. The enzyme catalyses Endohydrolysis of alpha-D-GalA-(1-&gt;2)-alpha-L-Rha glycosidic bond in the rhamnogalacturonan I backbone with initial inversion of anomeric configuration releasing oligosaccharides with beta-D-GalA at the reducing end.. Functionally, pectinolytic enzymes consist of four classes of enzymes: pectine lyase, polygalacturonase, pectin methylesterase and rhamnogalacturonase. Hydrolyzes alpha-D-galacturonopyranosyl-(1,2)-alpha-L-rhamnopyranosyl linkages in the backbone of the hairy regions of pectins. This is Rhamnogalacturonase B (rhgB) from Aspergillus niger.